The chain runs to 393 residues: Acetate kinase (393 aa).

A Mg(2+)-binding site is contributed by Asn-6. Residue Lys-13 coordinates ATP. A substrate-binding site is contributed by Arg-87. Catalysis depends on Asp-143, which acts as the Proton donor/acceptor. Residues 203 to 207 (HLGNG), 278 to 280 (DMR), and 326 to 330 (GIGEN) each bind ATP. A Mg(2+)-binding site is contributed by Glu-380.

The protein belongs to the acetokinase family. As to quaternary structure, homodimer. Mg(2+) serves as cofactor. Requires Mn(2+) as cofactor.

Its subcellular location is the cytoplasm. The catalysed reaction is acetate + ATP = acetyl phosphate + ADP. Its pathway is metabolic intermediate biosynthesis; acetyl-CoA biosynthesis; acetyl-CoA from acetate: step 1/2. In terms of biological role, catalyzes the formation of acetyl phosphate from acetate and ATP. Can also catalyze the reverse reaction. The sequence is that of Acetate kinase from Mycoplasma mycoides subsp. mycoides SC (strain CCUG 32753 / NCTC 10114 / PG1).